The primary structure comprises 546 residues: Chaperonin GroEL (546 aa).

Residues T30–P33, K51, D87–T91, G415, and D495 each bind ATP.

It belongs to the chaperonin (HSP60) family. As to quaternary structure, forms a cylinder of 14 subunits composed of two heptameric rings stacked back-to-back. Interacts with the co-chaperonin GroES.

The protein resides in the cytoplasm. The catalysed reaction is ATP + H2O + a folded polypeptide = ADP + phosphate + an unfolded polypeptide.. In terms of biological role, together with its co-chaperonin GroES, plays an essential role in assisting protein folding. The GroEL-GroES system forms a nano-cage that allows encapsulation of the non-native substrate proteins and provides a physical environment optimized to promote and accelerate protein folding. This Brucella melitensis biotype 1 (strain ATCC 23456 / CCUG 17765 / NCTC 10094 / 16M) protein is Chaperonin GroEL.